The chain runs to 496 residues: Thiamine transporter 2 (496 aa).

At 1 to 7 (MDCYRTS) the chain is on the cytoplasmic side. Residues 8–28 (LSSSWIYPTVILCLFGFFSMM) traverse the membrane as a helical segment. Residues 29-53 (RPSEPFLIPYLSGPDKNLTSAEITN) are Extracellular-facing. Asparagine 45 is a glycosylation site (N-linked (GlcNAc...) asparagine). The helical transmembrane segment at 54 to 74 (EIFPVWTYSYLVLLLPVFVLT) threads the bilayer. Residues 75 to 81 (DYVRYKP) are Cytoplasmic-facing. The chain crosses the membrane as a helical span at residues 82-102 (VIILQGISFIITWLLLLFGQG). Over 103–110 (VKTMQVVE) the chain is Extracellular. A helical membrane pass occupies residues 111 to 131 (FFYGMVTAAEVAYYAYIYSVV). At 132–144 (SPEHYQRVSGYCR) the chain is on the cytoplasmic side. A helical transmembrane segment spans residues 145–165 (SVTLAAYTAGSVLAQLLVSLA). A glycan (N-linked (GlcNAc...) asparagine) is linked at asparagine 166. Residues 166-169 (NMSY) are Extracellular-facing. A helical transmembrane segment spans residues 170 to 190 (FYLNVISLASVSVAFLFSLFL). The Cytoplasmic portion of the chain corresponds to 191 to 282 (PMPKKSMFFH…YSSKRLFYWS (92 aa)). Residues 283–303 (LWWAFATAGFNQVLNYVQILW) traverse the membrane as a helical segment. Residues 304-316 (DYKAPSQDSSIYN) lie on the Extracellular side of the membrane. A helical transmembrane segment spans residues 317–337 (GAVEAIATFGGAVAAFAVGYV). Residues 338–342 (KVNWD) are Cytoplasmic-facing. A helical transmembrane segment spans residues 343–363 (LLGELALVVFSVVNAGSLFLM). The Extracellular portion of the chain corresponds to 364–375 (HYTANIWACYAG). The helical transmembrane segment at 376-396 (YLIFKSSYMLLITIAVFQIAV) threads the bilayer. Residues 397–405 (NLNVERYAL) are Cytoplasmic-facing. A helical membrane pass occupies residues 406–426 (VFGINTFIALVIQTIMTVIVV). At 427–434 (DQRGLNLP) the chain is on the extracellular side. The helical transmembrane segment at 435–455 (VSIQFLVYGSYFAVIAGIFLM) threads the bilayer. The Cytoplasmic portion of the chain corresponds to 456-496 (RSMYITYSTKSQKDVQSPAPSENPDVSHPEEESNIIMSTKL). The disordered stretch occupies residues 468 to 496 (KDVQSPAPSENPDVSHPEEESNIIMSTKL).

This sequence belongs to the reduced folate carrier (RFC) transporter (TC 2.A.48) family. In terms of tissue distribution, widely expressed but most abundant in placenta, kidney and liver.

It is found in the membrane. The catalysed reaction is thiamine(out) + H(+)(in) = thiamine(in) + H(+)(out). It carries out the reaction pyridoxine(out) + n H(+)(out) = pyridoxine(in) + n H(+)(in). With respect to regulation, pyridoxine transport is inhibited by carbonyl cyanide p-trifluoromethoxyphenylhydrazone (FCCP) and carbonyl cyanide m-chlorophenylhydrazone (CCCP). Its function is as follows. Mediates high affinity thiamine uptake, probably via a proton anti-port mechanism. Has no folate transport activity. Mediates H(+)-dependent pyridoxine transport. This is Thiamine transporter 2 (SLC19A3) from Homo sapiens (Human).